The sequence spans 690 residues: Guanylate cyclase soluble subunit alpha-1 (690 aa).

S267 carries the post-translational modification Phosphoserine. The Guanylate cyclase domain occupies 481–608 (TMLFSDIVGF…NNVTLANKFE (128 aa)).

It belongs to the adenylyl cyclase class-4/guanylyl cyclase family. As to quaternary structure, the active enzyme is formed by a heterodimer of an alpha and a beta subunit. Heterodimer with GUCY1B1. Requires Mg(2+) as cofactor. It depends on Mn(2+) as a cofactor.

The protein localises to the cytoplasm. The enzyme catalyses GTP = 3',5'-cyclic GMP + diphosphate. Its activity is regulated as follows. Activated by nitric oxide in the presence of magnesium or manganese ions. The protein is Guanylate cyclase soluble subunit alpha-1 (GUCY1A1) of Canis lupus familiaris (Dog).